The primary structure comprises 303 residues: tRNA pseudouridine synthase B (303 aa).

The active-site Nucleophile is Asp47.

The protein belongs to the pseudouridine synthase TruB family. Type 1 subfamily.

The enzyme catalyses uridine(55) in tRNA = pseudouridine(55) in tRNA. Responsible for synthesis of pseudouridine from uracil-55 in the psi GC loop of transfer RNAs. This Legionella pneumophila (strain Lens) protein is tRNA pseudouridine synthase B.